The chain runs to 97 residues: Protein E7 (97 aa).

Positions 1–44 (MHGKKPSVQDIVLDLKPTTETDLTCYESLDNSEDEDETDSHLER) are E7 terminal domain. Residues 23-27 (LTCYE) carry the LXCXE motif; interaction with host RB1 and TMEM173/STING motif. The segment at 57 to 93 (CSRCQSTVCLTIESTHADLLVLEDLLMGALKIVCPNC) is a zinc-finger region. The short motif at 75–83 (LLVLEDLLM) is the Nuclear export signal element.

This sequence belongs to the papillomaviridae E7 protein family. Homodimer. Homooligomer. Interacts with host RB1; this interaction induces dissociation of RB1-E2F1 complex thereby disrupting RB1 activity. Interacts with host EP300; this interaction represses EP300 transcriptional activity. Interacts with protein E2; this interaction inhibits E7 oncogenic activity. Interacts with host TMEM173/STING; this interaction impairs the ability of TMEM173/STING to sense cytosolic DNA and promote the production of type I interferon (IFN-alpha and IFN-beta). Post-translationally, highly phosphorylated.

The protein resides in the host cytoplasm. The protein localises to the host nucleus. In terms of biological role, plays a role in viral genome replication by driving entry of quiescent cells into the cell cycle. Stimulation of progression from G1 to S phase allows the virus to efficiently use the cellular DNA replicating machinery to achieve viral genome replication. E7 protein has both transforming and trans-activating activities. Induces the disassembly of the E2F1 transcription factor from RB1, with subsequent transcriptional activation of E2F1-regulated S-phase genes. Interferes with host histone deacetylation mediated by HDAC1 and HDAC2, leading to transcription activation. Also plays a role in the inhibition of both antiviral and antiproliferative functions of host interferon alpha. Interaction with host TMEM173/STING impairs the ability of TMEM173/STING to sense cytosolic DNA and promote the production of type I interferon (IFN-alpha and IFN-beta). This Human papillomavirus type 34 protein is Protein E7.